Here is a 135-residue protein sequence, read N- to C-terminus: ATP synthase epsilon chain (135 aa).

Over residues 89 to 100 (SGKAEAELEKAK) the composition is skewed to basic and acidic residues. Positions 89–114 (SGKAEAELEKAKNQLSQNKDQGNSPE) are disordered. Polar residues predominate over residues 101–112 (NQLSQNKDQGNS).

It belongs to the ATPase epsilon chain family. In terms of assembly, F-type ATPases have 2 components, CF(1) - the catalytic core - and CF(0) - the membrane proton channel. CF(1) has five subunits: alpha(3), beta(3), gamma(1), delta(1), epsilon(1). CF(0) has three main subunits: a, b and c.

The protein resides in the cellular thylakoid membrane. Functionally, produces ATP from ADP in the presence of a proton gradient across the membrane. This Prochlorococcus marinus (strain NATL2A) protein is ATP synthase epsilon chain.